A 420-amino-acid polypeptide reads, in one-letter code: Glycogen synthase kinase-3 beta (420 aa).

The span at 1–22 (MSGRPRTTSFAESCKPVQQPSA) shows a compositional bias: polar residues. The disordered stretch occupies residues 1–53 (MSGRPRTTSFAESCKPVQQPSAFGSMKVSRDKDGSKVTTVVATPGQGPDRPQE). Phosphoserine; by PKB/AKT1, RPS6KA3 and SGK3 is present on Ser9. Cys14 is lipidated: S-palmitoyl cysteine. The Protein kinase domain maps to 56-340 (YTDTKVIGNG…PLEACAHSFF (285 aa)). ATP-binding positions include 62 to 70 (IGNGSFGVV) and Lys85. Asp181 (proton acceptor) is an active-site residue. Phosphotyrosine is present on Tyr216. A disordered region spans residues 385 to 420 (QAAASPPANATAASDTNAGDRGQTNNAASASASNST). Low complexity-rich tracts occupy residues 386–401 (AAAS…SDTN) and 409–420 (NNAASASASNST). Ser389 is modified (phosphoserine).

Belongs to the protein kinase superfamily. CMGC Ser/Thr protein kinase family. GSK-3 subfamily. As to quaternary structure, monomer. Interacts with DAB2IP (via C2 domain); the interaction stimulates GSK3B kinase activation. Interacts (via C2 domain) with PPP2CA. Interacts with CABYR, MMP2, MUC1, NIN and PRUNE1. Interacts with AXIN1; the interaction mediates hyperphosphorylation of CTNNB1 leading to its ubiquitination and destruction. Interacts with and phosphorylates SNAI1. Interacts with DNM1L (via a C-terminal domain). Interacts with ARRB2. Interacts with DISC1. Found in a complex composed of MACF1, APC, AXIN1, CTNNB1 and GSK3B. Interacts with SGK3. Interacts with the CLOCK-BMAL1 heterodimer. Interacts with ZBED3. Interacts with the BMAL1. The complex composed, at least, of APC, CTNNB1 and GSK3B interacts with JPT1; the interaction requires the inactive form of GSK3B (phosphorylated at 'Ser-9'). Forms a complex composed of PRKAR2A or PRKAR2B, GSK3B and GSKIP through GSKIP interaction; facilitates PKA-induced phosphorylation and regulates GSK3B activity. Interacts with GSKIP. Interacts with GID8. Interacts with PIWIL2. Interacts with LMBR1L. Interacts with DDX3X. Interacts with BIRC2. Interacts with TNFRSF10B; TNFRSF10B stimulation inhibits GSK3B kinase activity. Found in a complex with SLC39A6, SLC39A10 and with GSK3B that controls NCAM1 phosphorylation. Interacts with PKP3 (via ARM repeats); the interaction may be involved in PKP3 protein degradation. In terms of processing, phosphorylated by AKT1 and ILK1. Upon insulin-mediated signaling, the activated PKB/AKT1 protein kinase phosphorylates and deactivates GSK3B, resulting in the dephosphorylation and activation of GYS1. Activated by phosphorylation at Tyr-216. Phosphorylation of Ser-9 in the hippocampus peaks at CT0, whereas in the liver it peaks at CT12. Inactivated by phosphorylation at Ser-9. Phosphorylated in a circadian manner in the hippocampus. Mono-ADP-ribosylation by PARP10 negatively regulates kinase activity. Post-translationally, palmitoylated. Palmitoylation by ZDHHC4 prevents AKT1-mediated phosphorylation. In terms of tissue distribution, expressed in the liver (at protein level).

Its subcellular location is the cytoplasm. It is found in the nucleus. The protein resides in the cell membrane. The enzyme catalyses L-seryl-[tau protein] + ATP = O-phospho-L-seryl-[tau protein] + ADP + H(+). The catalysed reaction is L-threonyl-[tau protein] + ATP = O-phospho-L-threonyl-[tau protein] + ADP + H(+). It carries out the reaction L-seryl-[protein] + ATP = O-phospho-L-seryl-[protein] + ADP + H(+). It catalyses the reaction L-threonyl-[protein] + ATP = O-phospho-L-threonyl-[protein] + ADP + H(+). Activated by phosphorylation at Tyr-216. In response to insulin, inhibited by phosphorylation at Ser-9 by PKB/AKT1 and RPS6KA3; phosphorylation at this site causes a conformational change, preventing access of substrates to the active site. Inhibited by IL22 treatment which also triggers phosphorylation at Ser-9, promoting inactivation. Inhibited by lithium. In terms of biological role, constitutively active protein kinase that acts as a negative regulator in the hormonal control of glucose homeostasis, Wnt signaling and regulation of transcription factors and microtubules, by phosphorylating and inactivating glycogen synthase (GYS1 or GYS2), EIF2B, CTNNB1/beta-catenin, APC, AXIN1, DPYSL2/CRMP2, JUN, NFATC1/NFATC, MAPT/TAU and MACF1. Requires primed phosphorylation of the majority of its substrates. In skeletal muscle, contributes to insulin regulation of glycogen synthesis by phosphorylating and inhibiting GYS1 activity and hence glycogen synthesis. May also mediate the development of insulin resistance by regulating activation of transcription factors. Regulates protein synthesis by controlling the activity of initiation factor 2B (EIF2BE/EIF2B5) in the same manner as glycogen synthase. In Wnt signaling, GSK3B forms a multimeric complex with APC, AXIN1 and CTNNB1/beta-catenin and phosphorylates the N-terminus of CTNNB1 leading to its degradation mediated by ubiquitin/proteasomes. Phosphorylates JUN at sites proximal to its DNA-binding domain, thereby reducing its affinity for DNA. Phosphorylates NFATC1/NFATC on conserved serine residues promoting NFATC1/NFATC nuclear export, shutting off NFATC1/NFATC gene regulation, and thereby opposing the action of calcineurin. Phosphorylates MAPT/TAU on 'Thr-548', decreasing significantly MAPT/TAU ability to bind and stabilize microtubules. MAPT/TAU is the principal component of neurofibrillary tangles in Alzheimer disease. Plays an important role in ERBB2-dependent stabilization of microtubules at the cell cortex. Phosphorylates MACF1, inhibiting its binding to microtubules which is critical for its role in bulge stem cell migration and skin wound repair. Probably regulates NF-kappa-B (NFKB1) at the transcriptional level and is required for the NF-kappa-B-mediated anti-apoptotic response to TNF-alpha (TNF/TNFA). Negatively regulates replication in pancreatic beta-cells, resulting in apoptosis, loss of beta-cells and diabetes. Through phosphorylation of the anti-apoptotic protein MCL1, may control cell apoptosis in response to growth factors deprivation. Phosphorylates MUC1 in breast cancer cells, decreasing the interaction of MUC1 with CTNNB1/beta-catenin. Is necessary for the establishment of neuronal polarity and axon outgrowth. Phosphorylates MARK2, leading to inhibition of its activity. Phosphorylates SIK1 at 'Thr-182', leading to sustainment of its activity. Phosphorylates ZC3HAV1 which enhances its antiviral activity. Phosphorylates SNAI1, leading to its ubiquitination and proteasomal degradation. Phosphorylates SFPQ at 'Thr-687' upon T-cell activation. Phosphorylates NR1D1 st 'Ser-55' and 'Ser-59' and stabilizes it by protecting it from proteasomal degradation. Regulates the circadian clock via phosphorylation of the major clock components including BMAL1, CLOCK and PER2. Phosphorylates CLOCK AT 'Ser-427' and targets it for proteasomal degradation. Phosphorylates BMAL1 at 'Ser-17' and 'Ser-21' and primes it for ubiquitination and proteasomal degradation. Phosphorylates FBXL2 at 'Thr-404' and primes it for ubiquitination by the SCF(FBXO3) complex and proteasomal degradation. Phosphorylates OGT at 'Ser-3' or 'Ser-4' which positively regulates its activity. Phosphorylates MYCN in neuroblastoma cells which may promote its degradation. Regulates the circadian rhythmicity of hippocampal long-term potentiation and BMAL1 and PER2 expression. Acts as a regulator of autophagy by mediating phosphorylation of KAT5/TIP60 under starvation conditions, activating KAT5/TIP60 acetyltransferase activity and promoting acetylation of key autophagy regulators, such as ULK1 and RUBCNL/Pacer. Negatively regulates extrinsic apoptotic signaling pathway via death domain receptors. Promotes the formation of an anti-apoptotic complex, made of DDX3X, BRIC2 and GSK3B, at death receptors, including TNFRSF10B. The anti-apoptotic function is most effective with weak apoptotic signals and can be overcome by stronger stimulation. Phosphorylates E2F1, promoting the interaction between E2F1 and USP11, stabilizing E2F1 and promoting its activity. Phosphorylates mTORC2 complex component RICTOR at 'Ser-1235' in response to endoplasmic stress, inhibiting mTORC2. Phosphorylates FXR1, promoting FXR1 ubiquitination by the SCF(FBXO4) complex and FXR1 degradation by the proteasome. Phosphorylates interleukin-22 receptor subunit IL22RA1, preventing its proteasomal degradation. The chain is Glycogen synthase kinase-3 beta from Mus musculus (Mouse).